The chain runs to 240 residues: Uridylate kinase (240 aa).

Residue 14-17 (KLSG) participates in ATP binding. G56 is a UMP binding site. The ATP site is built by G57 and R61. UMP is bound by residues D76 and 137–144 (TGNPFFTT). Residues T164, Y170, and D173 each contribute to the ATP site.

The protein belongs to the UMP kinase family. In terms of assembly, homohexamer.

The protein localises to the cytoplasm. The catalysed reaction is UMP + ATP = UDP + ADP. It functions in the pathway pyrimidine metabolism; CTP biosynthesis via de novo pathway; UDP from UMP (UMPK route): step 1/1. Its activity is regulated as follows. Inhibited by UTP. Catalyzes the reversible phosphorylation of UMP to UDP. In Acidovorax sp. (strain JS42), this protein is Uridylate kinase.